The chain runs to 538 residues: Inositol-3-phosphate synthase (538 aa).

Residues Gly74, Gly75, Asn76, Asn77, Asp150, Ser186, Val187, Gln197, Asp198, Arg200, Thr247, Ala248, Asn249, Thr250, Gly298, Ser299, Asp323, Ser326, Asn357, Asn358, Asp359, Lys372, Gly412, Asp413, Asp441, and Ser442 each coordinate NAD(+).

The protein belongs to the myo-inositol 1-phosphate synthase family. As to quaternary structure, homotetramer. The cofactor is NAD(+).

It localises to the cytoplasm. It carries out the reaction D-glucose 6-phosphate = 1D-myo-inositol 3-phosphate. It functions in the pathway polyol metabolism; myo-inositol biosynthesis; myo-inositol from D-glucose 6-phosphate: step 1/2. Key enzyme in myo-inositol biosynthesis pathway that catalyzes the conversion of glucose 6-phosphate to 1-myo-inositol 1-phosphate in a NAD-dependent manner. Rate-limiting enzyme in the synthesis of all inositol-containing compounds. The sequence is that of Inositol-3-phosphate synthase (INO1) from Candida glabrata (strain ATCC 2001 / BCRC 20586 / JCM 3761 / NBRC 0622 / NRRL Y-65 / CBS 138) (Yeast).